A 504-amino-acid chain; its full sequence is 2,3-bisphosphoglycerate-independent phosphoglycerate mutase (504 aa).

Residues aspartate 13 and serine 63 each coordinate Mn(2+). Serine 63 acts as the Phosphoserine intermediate in catalysis. Substrate contacts are provided by residues histidine 124, 153–154, arginine 183, arginine 189, 254–257, and lysine 330; these read RD and RADR. Mn(2+) is bound by residues aspartate 397, histidine 401, aspartate 438, histidine 439, and histidine 457.

Belongs to the BPG-independent phosphoglycerate mutase family. In terms of assembly, monomer. Requires Mn(2+) as cofactor.

It catalyses the reaction (2R)-2-phosphoglycerate = (2R)-3-phosphoglycerate. It participates in carbohydrate degradation; glycolysis; pyruvate from D-glyceraldehyde 3-phosphate: step 3/5. Its function is as follows. Catalyzes the interconversion of 2-phosphoglycerate and 3-phosphoglycerate. This Rhodopseudomonas palustris (strain ATCC BAA-98 / CGA009) protein is 2,3-bisphosphoglycerate-independent phosphoglycerate mutase.